Consider the following 433-residue polypeptide: Phosphomethylpyrimidine synthase 1 (433 aa).

Residues Asn-66, Met-94, Tyr-123, His-162, 184 to 186, 225 to 228, and Glu-264 each bind substrate; these read SRG and DALR. His-268 provides a ligand contact to Zn(2+). Tyr-291 is a binding site for substrate. His-332 provides a ligand contact to Zn(2+). [4Fe-4S] cluster-binding residues include Cys-408, Cys-411, and Cys-415.

It belongs to the ThiC family. [4Fe-4S] cluster serves as cofactor.

The catalysed reaction is 5-amino-1-(5-phospho-beta-D-ribosyl)imidazole + S-adenosyl-L-methionine = 4-amino-2-methyl-5-(phosphooxymethyl)pyrimidine + CO + 5'-deoxyadenosine + formate + L-methionine + 3 H(+). It functions in the pathway cofactor biosynthesis; thiamine diphosphate biosynthesis. Its function is as follows. Catalyzes the synthesis of the hydroxymethylpyrimidine phosphate (HMP-P) moiety of thiamine from aminoimidazole ribotide (AIR) in a radical S-adenosyl-L-methionine (SAM)-dependent reaction. This Saccharolobus solfataricus (strain ATCC 35092 / DSM 1617 / JCM 11322 / P2) (Sulfolobus solfataricus) protein is Phosphomethylpyrimidine synthase 1.